Consider the following 201-residue polypeptide: 3-mercaptopropionate dioxygenase (201 aa).

The Fe cation site is built by His89, His91, and His142.

The protein belongs to the cysteine dioxygenase family. In terms of assembly, forms homodimer in the crystal; however, there is no evidence that the dimer exists under physiological conditions or has biological significance. Fe(2+) is required as a cofactor.

The catalysed reaction is 3-sulfanylpropanoate + O2 = 3-sulfinopropanoate + H(+). Thiol dioxygenase that catalyzes the dioxygenation of 3-mercaptopropionate (3-MPA) to 3-sulfinopropionate (3-SPA). To a lesser extent (40-fold lower efficiency), is also able to oxidize cysteine to cysteine sulfinate (CSA). Cannot use N-acetyl-L-cysteine, homocysteine, and cysteamine as substrates. The physiological role of this enzyme is unclear. In Pseudomonas aeruginosa (strain ATCC 15692 / DSM 22644 / CIP 104116 / JCM 14847 / LMG 12228 / 1C / PRS 101 / PAO1), this protein is 3-mercaptopropionate dioxygenase.